Consider the following 337-residue polypeptide: Fructose-1,6-bisphosphatase class 1 (337 aa).

Mg(2+) is bound by residues Glu-94, Asp-116, Leu-118, and Asp-119. Residues 119–122 (DGSS), Asn-210, and Lys-276 contribute to the substrate site. Glu-282 is a Mg(2+) binding site.

The protein belongs to the FBPase class 1 family. As to quaternary structure, homotetramer. Mg(2+) is required as a cofactor.

It localises to the cytoplasm. The enzyme catalyses beta-D-fructose 1,6-bisphosphate + H2O = beta-D-fructose 6-phosphate + phosphate. It functions in the pathway carbohydrate biosynthesis; gluconeogenesis. This chain is Fructose-1,6-bisphosphatase class 1, found in Burkholderia lata (strain ATCC 17760 / DSM 23089 / LMG 22485 / NCIMB 9086 / R18194 / 383).